A 584-amino-acid polypeptide reads, in one-letter code: Glycosyltransferase family 92 protein Os08g0121900 (584 aa).

The segment covering 1-10 (MALAAKERKL) has biased composition (basic and acidic residues). The disordered stretch occupies residues 1–33 (MALAAKERKLSRLGSKGSGGGGGGGSFGARGQR). The span at 16-28 (KGSGGGGGGGSFG) shows a compositional bias: gly residues. The chain crosses the membrane as a helical span at residues 43-63 (FAAFFAFLFAGAVLFGAAHVI). The GT92 domain occupies 314-525 (HSMCVCTMLR…DKFSGRVATY (212 aa)).

It belongs to the glycosyltransferase 92 family.

Its subcellular location is the membrane. In Oryza sativa subsp. japonica (Rice), this protein is Glycosyltransferase family 92 protein Os08g0121900.